A 348-amino-acid chain; its full sequence is NAC domain-containing protein 101 (348 aa).

An NAC domain is found at 7–156; it reads IPPGYRFHPT…GWVVCRAFKK (150 aa). Residues 107-162 mediate DNA binding; it reads VGMRKTLVFYKGRAPNGQKSDWIMHEYRLETDENGPPHEEGWVVCRAFKKKLTTMN. Positions 325-348 are disordered; sequence MVSMNASSSSSPCSFYSWAQNTHT. Low complexity predominate over residues 327–341; the sequence is SMNASSSSSPCSFYS.

It belongs to the plant vascular related NAC-domain protein family. Homodimer. Expressed in root inner metaxylem vessels and in hypocotyl vessels. Present in root developing xylems. Accumulates in the xylem but not in interfascicular fibers or pith cells in inflorescence stems. Absent from secondary xylem in roots.

Its subcellular location is the nucleus. Functionally, transcription activator that binds to the secondary wall NAC binding element (SNBE), 5'-(T/A)NN(C/T)(T/C/G)TNNNNNNNA(A/C)GN(A/C/T)(A/T)-3', and to the tracheary elements (TE) specific regulating cis-element (TERE), 5'-CTTNAAAGCNA-3', in the promoter of target genes (e.g. genes involved in secondary wall biosynthesis, cell wall modification such as xylan accumulation, and programmed cell death). Involved in xylem formation in roots and shoots, especially regulating metaxylem vessel differentiation by promoting immature xylem vessel-specific genes expression, especially genes regulating programmed cell death (PCD) and secondary wall formation in tracheary elements (TE). Can activate MYB25, MYB46, MYB58, MYB63, MYB83, MYB103, CESA4, LBD15, LBD30, ERF115, XCP1, XCP2, NAC010/SND3, KNAT7, ASL19 and ASL20 expression. The protein is NAC domain-containing protein 101 of Arabidopsis thaliana (Mouse-ear cress).